The sequence spans 493 residues: Glutamate--tRNA ligase (493 aa).

The 'HIGH' region motif lies at 10–20; sequence PSPTGDPHVGT. The Zn(2+) site is built by Cys-107, Cys-109, Cys-134, and His-136. The 'KMSKS' region motif lies at 251-255; sequence KLSKR. Residue Lys-254 coordinates ATP.

Belongs to the class-I aminoacyl-tRNA synthetase family. Glutamate--tRNA ligase type 1 subfamily. Monomer. Requires Zn(2+) as cofactor.

The protein localises to the cytoplasm. It catalyses the reaction tRNA(Glu) + L-glutamate + ATP = L-glutamyl-tRNA(Glu) + AMP + diphosphate. Catalyzes the attachment of glutamate to tRNA(Glu) in a two-step reaction: glutamate is first activated by ATP to form Glu-AMP and then transferred to the acceptor end of tRNA(Glu). The polypeptide is Glutamate--tRNA ligase (Ectopseudomonas mendocina (strain ymp) (Pseudomonas mendocina)).